Here is a 292-residue protein sequence, read N- to C-terminus: CCR4-NOT transcription complex subunit 8 (292 aa).

Residues Asp-40, Glu-42, Asp-161, and Asp-230 each contribute to the a divalent metal cation site.

This sequence belongs to the CAF1 family. In terms of assembly, component of the CCR4-NOT complex; distinct complexes seem to exist that differ in the participation of probably mutually exclusive catalytic subunits; the complex contains two deadenylase subunits, CNOT6 or CNOT6L, and CNOT7 or CNOT8. In the complex interacts directly with CNOT1. Interacts with BTG1, BTG2 and TOB1. Interacts with BTG4.

It is found in the cytoplasm. The protein resides in the nucleus. It catalyses the reaction Exonucleolytic cleavage of poly(A) to 5'-AMP.. Its function is as follows. Has 3'-5' poly(A) exoribonuclease activity for synthetic poly(A) RNA substrate. Its function seems to be partially redundant with that of CNOT7. Catalytic component of the CCR4-NOT complex which is linked to various cellular processes including bulk mRNA degradation, miRNA-mediated repression, translational repression during translational initiation and general transcription regulation. During miRNA-mediated repression the complex also seems to act as translational repressor during translational initiation. Additional complex functions may be a consequence of its influence on mRNA expression. Associates with members of the BTG family such as TOB1 and BTG2 and is required for their anti-proliferative activity. In Mus musculus (Mouse), this protein is CCR4-NOT transcription complex subunit 8 (Cnot8).